The chain runs to 140 residues: Histone H2B (140 aa).

Basic and acidic residues predominate over residues 1 to 10 (MPPKAAEKKP). A disordered region spans residues 1-48 (MPPKAAEKKPSTGGKAPAGKAPAEKKEAGKKTAAAASGEKKKRGKTRK). 2 positions are modified to N6-acetyllysine; alternate: K8 and K9. Glycyl lysine isopeptide (Lys-Gly) (interchain with G-Cter in SUMO); alternate cross-links involve residues K8 and K9. The segment covering 11–21 (STGGKAPAGKA) has biased composition (low complexity). K15 bears the N6-acetyllysine mark. K25 carries the post-translational modification N6-acetyllysine; alternate. Residue K25 forms a Glycyl lysine isopeptide (Lys-Gly) (interchain with G-Cter in SUMO); alternate linkage. K26 is covalently cross-linked (Glycyl lysine isopeptide (Lys-Gly) (interchain with G-Cter in SUMO)). A Glycyl lysine isopeptide (Lys-Gly) (interchain with G-Cter in ubiquitin) cross-link involves residue K134.

This sequence belongs to the histone H2B family. In terms of assembly, the nucleosome is a histone octamer containing two molecules each of H2A, H2B, H3 and H4 assembled in one H3-H4 heterotetramer and two H2A-H2B heterodimers. The octamer wraps approximately 147 bp of DNA. In terms of processing, monoubiquitinated by the ubc2-bre1 complex to form H2BK123ub1. H2BK123ub1 gives a specific tag for epigenetic transcriptional activation and is also prerequisite for H3K4me and H3K79me formation. H2BK123ub1 also modulates the formation of double-strand breaks during meiosis and is a prerequisite for DNA-damage checkpoint activation. Post-translationally, acetylated by gcn5 to form H2BK11ac and H2BK16ac. H2BK16ac can also be formed by esa1. Acetylation of N-terminal lysines and particularly formation of H2BK11acK16ac has a positive effect on transcription. Sumoylation to form H2BK6su or H2BK7su, and probably also H2BK16su or H2BK17su, occurs preferentially near the telomeres and represses gene transcription.

It localises to the nucleus. The protein localises to the chromosome. Its function is as follows. Core component of nucleosome. Nucleosomes wrap and compact DNA into chromatin, limiting DNA accessibility to the cellular machineries which require DNA as a template. Histones thereby play a central role in transcription regulation, DNA repair, DNA replication and chromosomal stability. DNA accessibility is regulated via a complex set of post-translational modifications of histones, also called histone code, and nucleosome remodeling. In Emericella nidulans (strain FGSC A4 / ATCC 38163 / CBS 112.46 / NRRL 194 / M139) (Aspergillus nidulans), this protein is Histone H2B (htbA).